The chain runs to 531 residues: Fe-S cluster assembly factor HCF101, chloroplastic (531 aa).

Residues M1 to R62 constitute a chloroplast transit peptide. Over residues A17 to P27 the composition is skewed to pro residues. Positions A17–A37 are disordered. Residues T28–A37 are compositionally biased toward low complexity. C181 to S188 lines the ATP pocket.

It belongs to the Mrp/NBP35 ATP-binding proteins family. The cofactor is [4Fe-4S] cluster.

The protein localises to the plastid. Its subcellular location is the chloroplast stroma. Functionally, required for photosystem I (PSI) biosynthesis and assembly. May serve as a chloroplast scaffold protein that specifically assembles iron-sulfur (4Fe-4S) clusters and transfers them to the chloroplast PSI and ferredoxin-thioredoxin (FTR) complexes. Probably not required for assembly or stability of plastidic 2Fe-2S clusters. In Oryza sativa subsp. japonica (Rice), this protein is Fe-S cluster assembly factor HCF101, chloroplastic (HCF101).